A 306-amino-acid polypeptide reads, in one-letter code: UDP-N-acetylenolpyruvoylglucosamine reductase (306 aa).

The FAD-binding PCMH-type domain occupies 34–199 (RVGGPAQLLF…TSVRLRGAIA (166 aa)). R179 is an active-site residue. S228 functions as the Proton donor in the catalytic mechanism. Residue E298 is part of the active site.

Belongs to the MurB family. The cofactor is FAD.

Its subcellular location is the cytoplasm. The enzyme catalyses UDP-N-acetyl-alpha-D-muramate + NADP(+) = UDP-N-acetyl-3-O-(1-carboxyvinyl)-alpha-D-glucosamine + NADPH + H(+). It functions in the pathway cell wall biogenesis; peptidoglycan biosynthesis. Functionally, cell wall formation. The protein is UDP-N-acetylenolpyruvoylglucosamine reductase of Rhodopseudomonas palustris (strain BisA53).